Reading from the N-terminus, the 545-residue chain is Chaperonin GroEL (545 aa).

ATP contacts are provided by residues Thr-29–Pro-32, Lys-50, Asp-86–Thr-90, Gly-415, and Asp-495.

It belongs to the chaperonin (HSP60) family. In terms of assembly, forms a cylinder of 14 subunits composed of two heptameric rings stacked back-to-back. Interacts with the co-chaperonin GroES.

Its subcellular location is the cytoplasm. The catalysed reaction is ATP + H2O + a folded polypeptide = ADP + phosphate + an unfolded polypeptide.. Together with its co-chaperonin GroES, plays an essential role in assisting protein folding. The GroEL-GroES system forms a nano-cage that allows encapsulation of the non-native substrate proteins and provides a physical environment optimized to promote and accelerate protein folding. This is Chaperonin GroEL from Phocaeicola vulgatus (strain ATCC 8482 / DSM 1447 / JCM 5826 / CCUG 4940 / NBRC 14291 / NCTC 11154) (Bacteroides vulgatus).